We begin with the raw amino-acid sequence, 2252 residues long: MMDSTIILPYAKYNYSLNKYLFYNSNLDIDLDSFNFYKKYNNTLSLLKRKFLDLFCIPVSSSSPPAIQKNGLLSASNPKHLFAFANFVLDCGVNPFLQIWEETLANWPLFQGQSLLACCRTTAEVRREAAEASAEILRLKQVEREHAFQAEVKSLIAAGALPACAEGLARKIWSAGKDQRKVRVAIRTKLTKANALGAAHRSAVATAQAKAEVLREFEPSPAHIQIAVKAHIFAEKLSRKYADLTAQVRARRAAARDLRAKEIYLEIVDLLGAPLLSIPQQIKIKGKYLRRSVAAEVEVPHTRNPMAELVPYKGLGAVSADPRCWVVAQCGKFSATHANLCSEIYSMVIGPWVQLTDFSSIRQFVMNISFLKDFYPEDALIASLKEVNTEAQLAVAAIVTQEEVSKMEANARSANCRANIFKRIASRITSAACSVKNAFLDGCELTGKRLSEGVFSVVIGHFREALTTIKFELGVAMELVEVLIARVKSWFDTLLAKIDHALASLGKWACYALGILLGIGLCNLIETIIGGHGMLVSLFCTGVFATMAIKCAGGWDAAQREMVAMITTLAQSIFGRRKGLDSTDLNTRSIPLLTNVITAMTTFGTGLCKFQSSSIIEIGKLAGACHQMRMGKEALKEFAAMIMHYLGRIADKITGRETIFFDELSTLVSVDVRGWIRCAQGAILESYHTDPGCETFQDVIGRLVQEGQKLQVGVNGIPRKISADYASLIGQIMKDLLELQKRMMRCGTVTGRRKEPVWIYLWGPSHCGKSNFMDVLGMALCKHFDLPYTVCGRNVKDSFFSGYMGQTIMEIDDLSSIKTDPPMEGELINLVSCKDYPLNMADVADKPIYFKSQFVISSSNQEDVPAGAGVRDISSYRSRKAALIEVRRKPGVIFDPDNAMAASQARFKDPMTHMLLNGQNDENSWMEMDDVITECINISARHRAAQEKLQNASLRAKASLDPVTLASQEFLRKEVNSVYLEIPTLEIEKAGISGVRGGRCLYADGILYTLGTEFQLIPHPVENEGYQKLWAQRMKNMYLPAVTTGRYLNASSMIVTGFLRSLVNGDCAVLSVDALSTTATFTQKRIFESLNLAERVYLRALQCQIDAYTLDIPENPYSNVCWVKMLKALGQGREFIVSNGGGILMIAAAIILVLVCGWGFWKAFVGLFTGSMSLGAALAGCQEAEVKAHSVYSADGGDRGYRSRNIPINHRYSYARSQAGNGLLPASRLCVAIYGPRGVFISGMQYKNKCVMMTRHQAQSLNEGDELSVVFASTGESMMIRFHAYHIRENVGSEVVCWLAPSLPQLPCDLKGLFLEDAEVELPSNFKSMGYVLRQDSNAFHYDTLDTYAAVDKTPLVLKGVNGDDLYIHEIPEKIVFHYESRNNDCGMLLTCQLSGKMKVVGMLVAGKDKTSWACILPNPHLAELKSQIEYIPEFGEAEEGYFKVGHVSPKEAPTMPKKTNSVQVPQALRVPCDLPIKEPSIISKNDPRCPANVDPPKAAMKKKFQQPMLDLDQKCLDEIAGDMLETWYDCEDSILSDIPLATAINGIPAGCEDAELENFVMKTSPGYPYFKNKGLGKGKHPYFEECEDGSLKLKEGSQAAELYENMAQFAKEEVPELVVIECPKDELLPARKIKVGPCRLFEIMPLHYNLLLRVKTCAFTAFLQHNRHRLPCQVGTNPYSREWGHLLNRLRRVKTNEAINCDYSGFDGLLTPQLVEMMAKMINRLYLRSGESEVMQAQRLNMIMALCGRYALVGTQVYKVNCGLPSGFALTVVMNSIFNEILIRYAYKTLAPTPEKNSFGINVCLLVYGDDNLISVSPAVASWFTGEAIRVTLAEKRIKITDGSDKDAPTIEAKPFSELDFLKRKFYVHPEHGQVWAPLDKSAIFSCLHWLTPQKSKFALQEKACDYLGEVDVVEELIINVNVSLVELYLHNDKEEFNRVRSFYIARLPMQVDQFRTWAFCEAFHSAQQTGMLRHDPAKILDSLAGPEFPRFMRCSGEGDKAHFYTPILGVCGPHYKPKEQDFLVSTLPIKQGEGVHIPIKIGGGVGGLPTHQWVKNFGRPSQLKNNDGYACYKLLCEQIEQGKRLVFMSAAPYVAGNAALISFGSSRKILKEQMPLCHYRNSIPESVDGLTGYFDAPLPAATIGKSYFANGETYAALCEFKNGEVLDIVGPTNVQILNGAVRQGKVPCLAAHSVGTKFKVSLVCNKTMCPHHHHTGPTFEQAFRTCWLSKCKTKETQVSPWFGTKFLGIS.

Topologically, residues 565–1140 (MITTLAQSIF…QGREFIVSNG (576 aa)) are cytoplasmic. The 167-residue stretch at 733–899 (MKDLLELQKR…PGVIFDPDNA (167 aa)) folds into the SF3 helicase domain. 763 to 770 (GPSHCGKS) contributes to the ATP binding site. A helical membrane pass occupies residues 1141 to 1161 (GGILMIAAAIILVLVCGWGFW). Topologically, residues 1162–1187 (KAFVGLFTGSMSLGAALAGCQEAEVK) are lumenal. In terms of domain architecture, Peptidase C3 spans 1213 to 1422 (SYARSQAGNG…WACILPNPHL (210 aa)). Active-site for picornain 3C-like protease activity residues include His1256, Glu1294, and Cys1386. One can recognise a RdRp catalytic domain in the interval 1697–1825 (NEAINCDYSG…SVSPAVASWF (129 aa)).

The protein belongs to the nepoviruses RNA1 polyprotein family. In terms of processing, specific enzymatic cleavages by picornain 3C-like protease in vivo yield mature proteins. Picornain 3C-like protease is autocatalytically processed. VPg is uridylylated by the polymerase and is covalently linked to the 5'-end of genomic RNA. This uridylylated form acts as a nucleotide-peptide primer for the polymerase.

The protein localises to the host endoplasmic reticulum lumen. It is found in the host endoplasmic reticulum membrane. The catalysed reaction is RNA(n) + a ribonucleoside 5'-triphosphate = RNA(n+1) + diphosphate. Its function is as follows. Picornain 3C-like protease is a thiol protease that cleaves the P1 and P2 polyproteins. This is RNA1 polyprotein from Apium graveolens (Celery).